Consider the following 703-residue polypeptide: Probable ATP-dependent RNA helicase vasa-like (703 aa).

Disordered stretches follow at residues 1–22 (MSDD…ESFG), 35–73 (NTGN…GRGG), and 88–167 (RDCP…RGCF). Over residues 61–73 (SGGGGFGGRGRGG) the composition is skewed to gly residues. A CCHC-type 1 zinc finger spans residues 77 to 92 (CFKCGDEGHMARDCPS). Gly residues predominate over residues 146–155 (FGFGSGSGSR). CCHC-type zinc fingers lie at residues 166 to 181 (CFKC…DCPS) and 189 to 204 (CFKC…DCPN). The Q motif signature appears at 261–289 (ESFQSMNLRPLLLENIVKAGYGCPTPVQK). Residues 292 to 475 (IPNVMNGRDI…SAFLNNYLFV (184 aa)) form the Helicase ATP-binding domain. 305-312 (AQTGSGKT) serves as a coordination point for ATP. Positions 419 to 422 (DEAD) match the DEAD box motif. Positions 506-651 (MCEEILISAD…TIPDWLTQKA (146 aa)) constitute a Helicase C-terminal domain. The segment at 676-703 (GGGRGWEKNQASSFLGGPSESNVDEEWD) is disordered.

This sequence belongs to the DEAD box helicase family. DDX4/VASA subfamily. Expressed in ovaries and testis. Not expressed in somatic tissue of the ovaries including follicle cells, muscle and connective tissue.

It is found in the cytoplasm. The protein localises to the nucleus. Its subcellular location is the nucleolus. The catalysed reaction is ATP + H2O = ADP + phosphate + H(+). Functionally, involved in translational control mechanisms operating in early stages of oogenesis. Required maternally in many stages of oogenesis, including cystocyte differentiation, oocyte differentiation, and specification of anterior-posterior polarity in the developing cysts. Essential for the formation and/or structural integrity of perinuclear nuage particles during germ cell formation. The sequence is that of Probable ATP-dependent RNA helicase vasa-like from Penaeus vannamei (Whiteleg shrimp).